The sequence spans 812 residues: Ras guanine nucleotide exchange factor J (812 aa).

2 stretches are compositionally biased toward low complexity: residues 1 to 36 and 53 to 65; these read MSNP…NSKS and LLNR…NLNN. Residues 1 to 146 are disordered; it reads MSNPVSINNS…GGSSGGLNMS (146 aa). Residues 75 to 86 show a composition bias toward polar residues; it reads SFTSNYQNIYTP. Positions 87–101 are enriched in low complexity; sequence NNNSYNSSNNNNNNN. Residues 131–141 are compositionally biased toward gly residues; that stretch reads NSGGGGGGSSG. The region spanning 214 to 246 is the LisH domain; the sequence is GRDTMLQLILQHLQFEGLMDSRKLLEEEARVQY. Residues 320 to 382 form a disordered region; that stretch reads IIYVDDKEKE…NNSIGNSNSY (63 aa). A compositionally biased stretch (basic and acidic residues) spans 323-343; the sequence is VDDKEKEKEKEKEKEKEKDKF. The span at 344–382 shows a compositional bias: low complexity; sequence GPNSTNSLSGSGSSPNIPSGMNNNSSSIGNNSIGNSNSY. An N-terminal Ras-GEF domain is found at 409–535; it reads NKPQVKAASL…LSESLNAKIK (127 aa). The 232-residue stretch at 573–804 folds into the Ras-GEF domain; sequence DEEEIARQLT…YSRSMSFEPR (232 aa).

Its function is as follows. Promotes the exchange of Ras-bound GDP by GTP. This is Ras guanine nucleotide exchange factor J (gefJ) from Dictyostelium discoideum (Social amoeba).